Consider the following 335-residue polypeptide: Nicotinate-nucleotide--dimethylbenzimidazole phosphoribosyltransferase (335 aa).

Glu304 functions as the Proton acceptor in the catalytic mechanism.

It belongs to the CobT family.

It carries out the reaction 5,6-dimethylbenzimidazole + nicotinate beta-D-ribonucleotide = alpha-ribazole 5'-phosphate + nicotinate + H(+). Its pathway is nucleoside biosynthesis; alpha-ribazole biosynthesis; alpha-ribazole from 5,6-dimethylbenzimidazole: step 1/2. Catalyzes the synthesis of alpha-ribazole-5'-phosphate from nicotinate mononucleotide (NAMN) and 5,6-dimethylbenzimidazole (DMB). The protein is Nicotinate-nucleotide--dimethylbenzimidazole phosphoribosyltransferase of Thermus thermophilus (strain ATCC 27634 / DSM 579 / HB8).